The following is an 82-amino-acid chain: Splicing factor U2AF 35 kDa subunit (82 aa).

At Ala-2 the chain carries N-acetylalanine. Residues 12 to 40 (EKDKVNCSFYFKIGACRHGDRCSRLHNKP) form a C3H1-type zinc finger. Lys-39 is subject to N6-methyllysine. The RRM domain occupies 65-82 (SHCHVSDVEVQEHYDNFF).

This sequence belongs to the splicing factor SR family. Identified in the spliceosome C complex. Heterodimer with U2AF2. Interacts (via RS domain) with PHF5A (via N-terminus). Interacts with ZRANB2. Interacts with SDE2. Interacts with SF3B1.

The protein localises to the nucleus. Its subcellular location is the nucleus speckle. In terms of biological role, plays a critical role in both constitutive and enhancer-dependent splicing by mediating protein-protein interactions and protein-RNA interactions required for accurate 3'-splice site selection. Recruits U2 snRNP to the branch point. Directly mediates interactions between U2AF2 and proteins bound to the enhancers and thus may function as a bridge between U2AF2 and the enhancer complex to recruit it to the adjacent intron. The polypeptide is Splicing factor U2AF 35 kDa subunit (U2AF1) (Sus scrofa (Pig)).